Reading from the N-terminus, the 252-residue chain is tRNA (guanine-N(1)-)-methyltransferase (252 aa).

S-adenosyl-L-methionine contacts are provided by residues Gly113 and 133–138; that span reads VGDFVL.

It belongs to the RNA methyltransferase TrmD family. Homodimer.

It is found in the cytoplasm. It catalyses the reaction guanosine(37) in tRNA + S-adenosyl-L-methionine = N(1)-methylguanosine(37) in tRNA + S-adenosyl-L-homocysteine + H(+). In terms of biological role, specifically methylates guanosine-37 in various tRNAs. This is tRNA (guanine-N(1)-)-methyltransferase from Francisella tularensis subsp. holarctica (strain FTNF002-00 / FTA).